The following is a 307-amino-acid chain: 4-diphosphocytidyl-2-C-methyl-D-erythritol kinase (307 aa).

K9 is a catalytic residue. 94–104 contributes to the ATP binding site; it reads PIGAGLAGGSS. D136 is an active-site residue.

The protein belongs to the GHMP kinase family. IspE subfamily.

It catalyses the reaction 4-CDP-2-C-methyl-D-erythritol + ATP = 4-CDP-2-C-methyl-D-erythritol 2-phosphate + ADP + H(+). The protein operates within isoprenoid biosynthesis; isopentenyl diphosphate biosynthesis via DXP pathway; isopentenyl diphosphate from 1-deoxy-D-xylulose 5-phosphate: step 3/6. Its function is as follows. Catalyzes the phosphorylation of the position 2 hydroxy group of 4-diphosphocytidyl-2C-methyl-D-erythritol. In Synechococcus sp. (strain CC9605), this protein is 4-diphosphocytidyl-2-C-methyl-D-erythritol kinase.